The chain runs to 418 residues: Tyrosine--tRNA ligase (418 aa).

Tyr-38 is a binding site for L-tyrosine. The 'HIGH' region motif lies at Cys-43–Ser-52. 2 residues coordinate L-tyrosine: Tyr-175 and Gln-179. Residues Lys-235–Thr-239 carry the 'KMSKS' region motif. Lys-238 serves as a coordination point for ATP. The region spanning Leu-348 to Met-413 is the S4 RNA-binding domain.

It belongs to the class-I aminoacyl-tRNA synthetase family. TyrS type 1 subfamily. In terms of assembly, homodimer.

The protein localises to the cytoplasm. It catalyses the reaction tRNA(Tyr) + L-tyrosine + ATP = L-tyrosyl-tRNA(Tyr) + AMP + diphosphate + H(+). Its function is as follows. Catalyzes the attachment of tyrosine to tRNA(Tyr) in a two-step reaction: tyrosine is first activated by ATP to form Tyr-AMP and then transferred to the acceptor end of tRNA(Tyr). The polypeptide is Tyrosine--tRNA ligase (Ehrlichia chaffeensis (strain ATCC CRL-10679 / Arkansas)).